A 118-amino-acid chain; its full sequence is Small ribosomal subunit protein uS13 (118 aa).

A disordered region spans residues Gly94–Lys118.

This sequence belongs to the universal ribosomal protein uS13 family. Part of the 30S ribosomal subunit. Forms a loose heterodimer with protein S19. Forms two bridges to the 50S subunit in the 70S ribosome.

Functionally, located at the top of the head of the 30S subunit, it contacts several helices of the 16S rRNA. In the 70S ribosome it contacts the 23S rRNA (bridge B1a) and protein L5 of the 50S subunit (bridge B1b), connecting the 2 subunits; these bridges are implicated in subunit movement. Contacts the tRNAs in the A and P-sites. The sequence is that of Small ribosomal subunit protein uS13 from Alcanivorax borkumensis (strain ATCC 700651 / DSM 11573 / NCIMB 13689 / SK2).